Consider the following 314-residue polypeptide: tRNA dimethylallyltransferase (314 aa).

Residue 13–20 (GPTAIGKT) participates in ATP binding. A substrate-binding site is contributed by 15–20 (TAIGKT). The interaction with substrate tRNA stretch occupies residues 38 to 41 (DSMQ).

It belongs to the IPP transferase family. Monomer. It depends on Mg(2+) as a cofactor.

It catalyses the reaction adenosine(37) in tRNA + dimethylallyl diphosphate = N(6)-dimethylallyladenosine(37) in tRNA + diphosphate. In terms of biological role, catalyzes the transfer of a dimethylallyl group onto the adenine at position 37 in tRNAs that read codons beginning with uridine, leading to the formation of N6-(dimethylallyl)adenosine (i(6)A). The chain is tRNA dimethylallyltransferase from Desulfotalea psychrophila (strain LSv54 / DSM 12343).